The following is a 103-amino-acid chain: Large ribosomal subunit protein bL28 (103 aa).

It belongs to the bacterial ribosomal protein bL28 family.

The polypeptide is Large ribosomal subunit protein bL28 (Anaplasma marginale (strain St. Maries)).